The sequence spans 316 residues: Porphobilinogen deaminase (316 aa).

The residue at position 249 (Cys249) is an S-(dipyrrolylmethanemethyl)cysteine.

Belongs to the HMBS family. As to quaternary structure, monomer. Dipyrromethane is required as a cofactor.

It catalyses the reaction 4 porphobilinogen + H2O = hydroxymethylbilane + 4 NH4(+). The protein operates within porphyrin-containing compound metabolism; protoporphyrin-IX biosynthesis; coproporphyrinogen-III from 5-aminolevulinate: step 2/4. Functionally, tetrapolymerization of the monopyrrole PBG into the hydroxymethylbilane pre-uroporphyrinogen in several discrete steps. The sequence is that of Porphobilinogen deaminase from Nitrobacter hamburgensis (strain DSM 10229 / NCIMB 13809 / X14).